Reading from the N-terminus, the 305-residue chain is MLKQRTIKSIVKTVGIGLHSGRKVELTLRPAAPDTGIVFSRVDLPTPVDIPASALSIGDTRLASVLQKDGARVSTVEHLMSACAGLGIDNLYVDVTAEEIPIMDGSAASFVFLIQSAGIEEQNAAKKFIKVTKPVEIRDGDKFARLDPYFGFKLKFTIDFRHPAVDKTGQELEVDFANTSYVREIARARTFGFAHEVEMMRELGLARGGSMDNAIVLDEYRILNNDGLRYDDEFVKHKMLDAIGDLYVVGHPLLASYTAYKSGHGLNNALLRELLAHEDAYEIVTFDDPKAAPTGFGFDAQTAFA.

Zn(2+) contacts are provided by His-78, His-237, and Asp-241. His-264 acts as the Proton donor in catalysis.

It belongs to the LpxC family. Requires Zn(2+) as cofactor.

The catalysed reaction is a UDP-3-O-[(3R)-3-hydroxyacyl]-N-acetyl-alpha-D-glucosamine + H2O = a UDP-3-O-[(3R)-3-hydroxyacyl]-alpha-D-glucosamine + acetate. It participates in glycolipid biosynthesis; lipid IV(A) biosynthesis; lipid IV(A) from (3R)-3-hydroxytetradecanoyl-[acyl-carrier-protein] and UDP-N-acetyl-alpha-D-glucosamine: step 2/6. Catalyzes the hydrolysis of UDP-3-O-myristoyl-N-acetylglucosamine to form UDP-3-O-myristoylglucosamine and acetate, the committed step in lipid A biosynthesis. This Burkholderia thailandensis (strain ATCC 700388 / DSM 13276 / CCUG 48851 / CIP 106301 / E264) protein is UDP-3-O-acyl-N-acetylglucosamine deacetylase.